We begin with the raw amino-acid sequence, 436 residues long: Trigger factor (436 aa).

In terms of domain architecture, PPIase FKBP-type spans 161–246 (GMRVTMDFIG…LIKVEEQILP (86 aa)).

The protein belongs to the FKBP-type PPIase family. Tig subfamily.

The protein localises to the cytoplasm. It catalyses the reaction [protein]-peptidylproline (omega=180) = [protein]-peptidylproline (omega=0). In terms of biological role, involved in protein export. Acts as a chaperone by maintaining the newly synthesized protein in an open conformation. Functions as a peptidyl-prolyl cis-trans isomerase. This chain is Trigger factor, found in Aeromonas salmonicida (strain A449).